Consider the following 189-residue polypeptide: High affinity copper uptake protein 1 (189 aa).

At 1–67 the chain is on the extracellular side; it reads MDHSAHMGMS…AGLVINTAGE (67 aa). The Methionine segments (Mets) motif signature appears at 13 to 18; that stretch reads MGMSDM. The disordered stretch occupies residues 15-36; sequence MSDMNHSTTMPPSHHHPTSSGS. Residues 20-36 show a composition bias toward low complexity; sequence HSTTMPPSHHHPTSSGS. Residues 68–88 traverse the membrane as a helical segment; sequence MAGAFVAVFLLAMFYEGLKIA. Over 89-131 the chain is Cytoplasmic; sequence REGLLRKSQVSIRYNSMPVPGPNGTILMETHKTVGQQMLSFPH. Thr-113 carries the phosphothreonine modification. Residues 132–152 form a helical membrane-spanning segment; the sequence is LLQTVLHIIQVVISYFLMLIF. At 153 to 155 the chain is on the extracellular side; it reads MTY. Residues 156–176 traverse the membrane as a helical segment; that stretch reads NGYLCIAVAAGAGTGYFLFSW. Residues 177–189 are Cytoplasmic-facing; the sequence is KKAVVVDITEHCH. Cys-188 carries the cysteine sulfenic acid (-SOH) modification.

This sequence belongs to the copper transporter (Ctr) (TC 1.A.56) family. SLC31A subfamily. Homotrimer; is stabilized by cisplatin via interactions between cisplatin and the methionine-rich clusters, and could be crucial for the copper(2+) reduction process and copper(1+) stabilization. Heterotrimer between SLC31A1, CCS and SOD1; this heterotrimer is copper(1+)-mediated and its maintenance is regulated through SOD1 activation. Interacts with KDR; this interaction is induced upon VEGFA stimulation leading to SLC31A1 and KDR subsequent co-internalization to early endosomes, thereby activating KDR downstream signaling in endothelial cells. Interacts (via C-terminal domain) with ATOX1 (via dimer form); this interaction improves ATOX1 stability and controls intracellular copper(1+) levels. Interacts with SLC31A2; this interaction stabilizes SLC31A2 and protects its from ubiquitination and degradation. Interacts (via C-terminal domain) with CCS; this interaction is copper(1+)-mediated. Proteolytic cleavage, leading to a truncated form, is facilitated by SLC31A2 and initiated preferentially by CTSL and to a minor extend by CTSB in endolysosomal compartments. A post-CTSL/cathepsin L processing occurs to yield to the fully truncated form. Post-translationally, sulfenylated at Cys-188 after stimulation with VEGFA, which induces SLC31A1-KDR disulfide bond formation and their co-internalization to early endosomes, driving to a sustained VEGFR2 signaling.

Its subcellular location is the cell membrane. It localises to the early endosome membrane. The protein localises to the recycling endosome membrane. It is found in the apical cell membrane. The protein resides in the late endosome membrane. Its subcellular location is the basolateral cell membrane. The catalysed reaction is Ag(+)(out) = Ag(+)(in). It catalyses the reaction Cu(+)(out) = Cu(+)(in). In terms of biological role, uniporter that mediates the transport of copper(1+) from the extracellular space to the cytoplasm, across the plasma membrane and delivers directly copper(1+) to specific chaperone such as ATOX1, via a copper(1+)- mediated transient interaction between the C-terminal domain and a copper(1+) chaperone, thus controlling intracellular copper(1+) levels. May function in copper(1+) import from the apical membrane thus may drive intestinal copper absorption. The copper(1+) transport mechanism is sodium-independent, saturable and of high-affinity. Also mediates the uptake of silver(1+). May function in the influx of the platinum-containing chemotherapeutic agents. The platinum-containing chemotherapeutic agents uptake is saturable. In vitro, mediates the transport of cadmium(2+) into cells. Also participates in the first step of copper(2+) acquisition by cells through a direct transfer of copper(2+) from copper(2+) carriers in blood, such as ALB to the N-terminal domain of SLC31A1, leading to copper(2+) reduction and probably followed by copper(1+) stabilization. In addition, functions as a redox sensor to promote angiogenesis in endothelial cells, in a copper(1+) transport independent manner, by transmitting the VEGF-induced ROS signal through a sulfenylation at Cys-189 leadin g to a subsequent disulfide bond formation between SLC31A1 and KDR. The SLC31A1-KDR complex is then co-internalized to early endosomes, driving a sustained VEGFR2 signaling. Its function is as follows. Mobilizes copper(1+) out of the endosomal compartment, making copper(1+) available for export out of the cells. The sequence is that of High affinity copper uptake protein 1 from Sus scrofa (Pig).